Consider the following 372-residue polypeptide: Solute carrier family 35 member F6 (372 aa).

Residues 1–18 form the signal peptide; sequence MAWTKYQLFLAGLMLVTG. Transmembrane regions (helical) follow at residues 48-68 and 89-109; these read FVQAVGMFLGEFSCLAAFYLL and LLFLPPALCDMTGTSIMYVAL. Residues 105–160 form the EamA domain; the sequence is MYVALNMTSASSFQMLRGAVIIFTGLFSVAFLDRRLVPSQWLGILITIAGLVVVGL. An N-linked (GlcNAc...) asparagine glycan is attached at asparagine 110. Transmembrane regions (helical) follow at residues 116–136, 145–165, 176–196, 211–231, 261–281, 293–312, and 320–336; these read SFQMLRGAVIIFTGLFSVAFL, WLGILITIAGLVVVGLADLLS, VITGDLLIIMAQIIIAIQMVL, AVGIEGFFGFVILSLLLVPMY, LIALALLGNISSIAFFNFSGI, MVLDTLRTVVIWAFTLALGW, and ILGFLILLMGTALYNGL. Threonine 366 carries the post-translational modification Phosphothreonine.

The protein belongs to the SLC35F solute transporter family. Interacts with SLC25A5.

It is found in the mitochondrion. The protein localises to the lysosome membrane. Its function is as follows. Involved in the maintenance of mitochondrial membrane potential in pancreatic ductal adenocarcinoma (PDAC) cells. Promotes pancreatic ductal adenocarcinoma (PDAC) cell growth. May play a role as a nucleotide-sugar transporter. The polypeptide is Solute carrier family 35 member F6 (Slc35f6) (Rattus norvegicus (Rat)).